Consider the following 306-residue polypeptide: Methionyl-tRNA formyltransferase (306 aa).

A (6S)-5,6,7,8-tetrahydrofolate-binding site is contributed by 110 to 113; it reads SLLP.

It belongs to the Fmt family.

It carries out the reaction L-methionyl-tRNA(fMet) + (6R)-10-formyltetrahydrofolate = N-formyl-L-methionyl-tRNA(fMet) + (6S)-5,6,7,8-tetrahydrofolate + H(+). In terms of biological role, attaches a formyl group to the free amino group of methionyl-tRNA(fMet). The formyl group appears to play a dual role in the initiator identity of N-formylmethionyl-tRNA by promoting its recognition by IF2 and preventing the misappropriation of this tRNA by the elongation apparatus. The polypeptide is Methionyl-tRNA formyltransferase (Brucella suis (strain ATCC 23445 / NCTC 10510)).